The primary structure comprises 21 residues: Pollen allergen Ole e 7 (21 aa).

The polypeptide is Pollen allergen Ole e 7 (Olea europaea (Common olive)).